The chain runs to 624 residues: MPIQVLPPQLANQIAAGEVVERPASVVKELVENSLDAGATRIDIDIERGGAKLIRIRDNGSGIGKDDLALALARHATSKISTLDDLEAIVSLGFRGEALASISSVSRLTLTSRTAEQNEAWQAYAEGRDQAVTVKPAAHPIGSTLEVLDLFYNTPARRKFMRTEKTEFGHIDEVVRRIALARFDVAINLSHNGKLMRQYRAAKDESQYERRLGSICGPAFLQHALNISWQHGDLTIRGWVADPAGARQLGEMQYCYVNSRMMRDRLINHAIRQAYQDQLKDDQQPAYVLYLEVDPHQVDVNVHPAKHEVRFHQARLVHDFIYQAVTTVLQQVGNAPLPLTDETEQQPTPVWQPENRVAAGGNHFSQPAPRRETASTEPAVARERAPQPAYHSGSGYQKREGELYGKLLQATPVAEPRQEAPKQPLFPPVKTEQETPLAGSQHSFGRVLMIYPPCYALIENGQQLMLLNLPVAERWLRQAQLNPSQEGLRPQPLLIPIKLTLNKQEAAACIHHQPLLVTMGLDLQVDHGRVTLRAVPLPLRQQNLQKLIPELLGYLAEHQEMSPAVLATWFARHLGSEHEQWNTSQAIQLLTDVERLCPQLVKSPPSGLLQPVDLQAALTALRHD.

The segment at 360–396 (GGNHFSQPAPRRETASTEPAVARERAPQPAYHSGSGY) is disordered. Residues 369–385 (PRRETASTEPAVARERA) show a composition bias toward basic and acidic residues.

This sequence belongs to the DNA mismatch repair MutL/HexB family.

This protein is involved in the repair of mismatches in DNA. It is required for dam-dependent methyl-directed DNA mismatch repair. May act as a 'molecular matchmaker', a protein that promotes the formation of a stable complex between two or more DNA-binding proteins in an ATP-dependent manner without itself being part of a final effector complex. The chain is DNA mismatch repair protein MutL from Serratia proteamaculans (strain 568).